A 695-amino-acid chain; its full sequence is Serotransferrin (695 aa).

The signal sequence occupies residues 1 to 19 (MRLAAGALLACAALGLCLA). Transferrin-like domains are found at residues 25–347 (VRWC…NLRE) and 361–680 (VKWC…NLRK). 2 cysteine pairs are disulfide-bonded: C28–C67 and C38–C58. R42 bears the Dimethylated arginine mark. Positions 82 and 114 each coordinate Fe(3+). Cystine bridges form between C137–C213, C156–C350, C177–C193, C180–C196, C190–C198, C246–C260, C358–C612, C364–C396, C374–C387, C421–C690, C436–C653, C468–C539, C492–C681, C502–C516, C513–C522, C579–C593, and C631–C636. Hydrogencarbonate contacts are provided by T139, R143, A145, and G146. Y207 lines the Fe(3+) pocket. H268 contacts Fe(3+). A Phosphoserine modification is found at S389. Fe(3+) is bound by residues D411 and Y444. T470, R474, A476, and G477 together coordinate hydrogencarbonate. A glycan (N-linked (GlcNAc...) asparagine) is linked at N509. Y533 contacts Fe(3+). A Fe(3+)-binding site is contributed by H601. S682 carries the post-translational modification Phosphoserine.

It belongs to the transferrin family. Monomer. Part of a complex composed of SLC40A1/ferroportin, TF/transferrin and HEPH/hephaestin that transfers iron from cells to transferrin. Expressed by the liver and secreted in plasma.

It is found in the secreted. Transferrins are iron binding transport proteins which can bind two Fe(3+) ions in association with the binding of an anion, usually bicarbonate. It is responsible for the transport of iron from sites of absorption and heme degradation to those of storage and utilization. Serum transferrin may also have a further role in stimulating cell proliferation. This Oryctolagus cuniculus (Rabbit) protein is Serotransferrin (TF).